A 178-amino-acid chain; its full sequence is Crossover junction endodeoxyribonuclease RuvC (178 aa).

Catalysis depends on residues aspartate 20, glutamate 80, and aspartate 154. The Mg(2+) site is built by aspartate 20, glutamate 80, and aspartate 154.

This sequence belongs to the RuvC family. As to quaternary structure, homodimer which binds Holliday junction (HJ) DNA. The HJ becomes 2-fold symmetrical on binding to RuvC with unstacked arms; it has a different conformation from HJ DNA in complex with RuvA. In the full resolvosome a probable DNA-RuvA(4)-RuvB(12)-RuvC(2) complex forms which resolves the HJ. Mg(2+) is required as a cofactor.

The protein localises to the cytoplasm. The catalysed reaction is Endonucleolytic cleavage at a junction such as a reciprocal single-stranded crossover between two homologous DNA duplexes (Holliday junction).. Its function is as follows. The RuvA-RuvB-RuvC complex processes Holliday junction (HJ) DNA during genetic recombination and DNA repair. Endonuclease that resolves HJ intermediates. Cleaves cruciform DNA by making single-stranded nicks across the HJ at symmetrical positions within the homologous arms, yielding a 5'-phosphate and a 3'-hydroxyl group; requires a central core of homology in the junction. The consensus cleavage sequence is 5'-(A/T)TT(C/G)-3'. Cleavage occurs on the 3'-side of the TT dinucleotide at the point of strand exchange. HJ branch migration catalyzed by RuvA-RuvB allows RuvC to scan DNA until it finds its consensus sequence, where it cleaves and resolves the cruciform DNA. This Rhodopirellula baltica (strain DSM 10527 / NCIMB 13988 / SH1) protein is Crossover junction endodeoxyribonuclease RuvC.